The chain runs to 394 residues: Putative bacilysin exporter BacE (394 aa).

11 helical membrane passes run 11-31, 43-63, 69-89, 92-112, 142-162, 166-186, 215-235, 244-264, 288-308, 332-352, and 353-373; these read LLYG…ALLI, SGVI…GVLV, IKIM…LTFL, GEYP…GVFF, IIVG…ELAV, GVTY…FVPI, MFTM…FPIV, IGNF…AALV, LFLF…FFIA, IFSV…MFIN, and ILSA…LFLH.

This sequence belongs to the major facilitator superfamily. Drug:H(+) antiporter-3 (DHA3) (TC 2.A.1.21) family.

It is found in the cell membrane. Its function is as follows. Part of the bacilysin biosynthesis operon. May be involved in self-resistance to bacilysin by permitting efflux of this antibiotic. This Bacillus subtilis (strain 168) protein is Putative bacilysin exporter BacE (bacE).